The sequence spans 213 residues: Large ribosomal subunit protein uL1 (213 aa).

This sequence belongs to the universal ribosomal protein uL1 family. In terms of assembly, part of the 50S ribosomal subunit.

In terms of biological role, binds directly to 23S rRNA. Probably involved in E site tRNA release. Its function is as follows. Protein L1 is also a translational repressor protein, it controls the translation of its operon by binding to its mRNA. The protein is Large ribosomal subunit protein uL1 of Methanosarcina barkeri (strain Fusaro / DSM 804).